Consider the following 513-residue polypeptide: Ribonuclease Y (513 aa).

Residues 4 to 24 (TTSLIIAILAGILGIVIGFFF) form a helical membrane-spanning segment. A disordered region spans residues 78–106 (KSRLKEISRQEDRLNSKEENLERKNASLE). The region spanning 203-288 (TVSVVNLPND…EMVEKARKDV (86 aa)) is the KH domain. Positions 329 to 422 (VLKHSIEVSN…VQSADAISAA (94 aa)) constitute an HD domain.

The protein belongs to the RNase Y family.

The protein localises to the cell membrane. In terms of biological role, endoribonuclease that initiates mRNA decay. The sequence is that of Ribonuclease Y from Finegoldia magna (strain ATCC 29328 / DSM 20472 / WAL 2508) (Peptostreptococcus magnus).